Consider the following 366-residue polypeptide: Bacteriochlorophyll a protein (366 aa).

His111, His146, His290, His297, and His298 together coordinate bacteriochlorophyll a.

In terms of assembly, homotrimer. Each subunit contains 7 molecules of bacteriochlorophyll a.

Its function is as follows. Intermediary in the transfer of excitation energy from the chlorophyll to the reaction centers. In Chlorobaculum tepidum (strain ATCC 49652 / DSM 12025 / NBRC 103806 / TLS) (Chlorobium tepidum), this protein is Bacteriochlorophyll a protein (fmoA).